Consider the following 314-residue polypeptide: Putative SET domain-containing protein L222 (314 aa).

The 150-residue stretch at 23–172 (EYIQVIYQNP…ANTEITISYG (150 aa)) folds into the SET domain.

Belongs to the class V-like SAM-binding methyltransferase superfamily.

The sequence is that of Putative SET domain-containing protein L222 from Acanthamoeba polyphaga mimivirus (APMV).